Here is a 608-residue protein sequence, read N- to C-terminus: Dolichyl-diphosphooligosaccharide--protein glycosyltransferase subunit 1 (608 aa).

A signal peptide spans 1-25; the sequence is MESPVALLLLLLLCLGALAPTPGSA. Residues 26 to 440 lie on the Lumenal side of the membrane; the sequence is SSEAPPLVNE…FNKVLMLQEP (415 aa). N6-acetyllysine is present on lysine 188. Residue asparagine 300 is glycosylated (N-linked (GlcNAc...) asparagine). The chain crosses the membrane as a helical span at residues 441–458; it reads LLVVAAFYILFFTVIIYV. The Cytoplasmic segment spans residues 459 to 608; it reads RLDFSITKDP…TKIDHILDAL (150 aa). N6-acetyllysine; alternate is present on lysine 539. Lysine 539 participates in a covalent cross-link: Glycyl lysine isopeptide (Lys-Gly) (interchain with G-Cter in SUMO2); alternate.

Belongs to the OST1 family. Component of the oligosaccharyltransferase (OST) complex. OST exists in two different complex forms which contain common core subunits RPN1, RPN2, OST48, OST4, DAD1 and TMEM258, either STT3A or STT3B as catalytic subunits, and form-specific accessory subunits. STT3A complex assembly occurs through the formation of 3 subcomplexes. Subcomplex 1 contains RPN1 and TMEM258, subcomplex 2 contains the STT3A-specific subunits STT3A, DC2/OSTC, and KCP2 as well as the core subunit OST4, and subcomplex 3 contains RPN2, DAD1, and OST48. The STT3A complex can form stable complexes with the Sec61 complex or with both the Sec61 and TRAP complexes. Interacts with TMEM35A/NACHO. Ubiquitinated by the ECS(ASB11) complex. Ubiquitinated by RNF128, leading to degradation in a proteasome/lysosome-dependent manner. In terms of processing, ufmylated by UFL1 in response to endoplasmic reticulum stress, promoting reticulophagy of endoplasmic reticulum sheets.

The protein localises to the endoplasmic reticulum membrane. It participates in protein modification; protein glycosylation. Subunit of the oligosaccharyl transferase (OST) complex that catalyzes the initial transfer of a defined glycan (Glc(3)Man(9)GlcNAc(2) in eukaryotes) from the lipid carrier dolichol-pyrophosphate to an asparagine residue within an Asn-X-Ser/Thr consensus motif in nascent polypeptide chains, the first step in protein N-glycosylation. N-glycosylation occurs cotranslationally and the complex associates with the Sec61 complex at the channel-forming translocon complex that mediates protein translocation across the endoplasmic reticulum (ER). All subunits are required for a maximal enzyme activity. The protein is Dolichyl-diphosphooligosaccharide--protein glycosyltransferase subunit 1 of Mus musculus (Mouse).